A 44-amino-acid polypeptide reads, in one-letter code: U4-ctenitoxin-Pk1a (44 aa).

Cystine bridges form between cysteine 4–cysteine 18, cysteine 11–cysteine 24, cysteine 15–cysteine 42, cysteine 17–cysteine 33, and cysteine 26–cysteine 31.

In terms of tissue distribution, expressed by the venom gland.

Its subcellular location is the secreted. Its function is as follows. Neurotoxin. Causes spastic paralysis and death in mice within 10 minutes at dose levels of 3 ug per mouse. The sequence is that of U4-ctenitoxin-Pk1a from Phoneutria keyserlingi (Brazilian wandering spider).